Reading from the N-terminus, the 142-residue chain is ATP synthase epsilon chain (142 aa).

The protein belongs to the ATPase epsilon chain family. In terms of assembly, F-type ATPases have 2 components, CF(1) - the catalytic core - and CF(0) - the membrane proton channel. CF(1) has five subunits: alpha(3), beta(3), gamma(1), delta(1), epsilon(1). CF(0) has three main subunits: a, b and c.

It is found in the cell inner membrane. Its function is as follows. Produces ATP from ADP in the presence of a proton gradient across the membrane. This is ATP synthase epsilon chain from Shewanella oneidensis (strain ATCC 700550 / JCM 31522 / CIP 106686 / LMG 19005 / NCIMB 14063 / MR-1).